We begin with the raw amino-acid sequence, 303 residues long: Mitochondrial carrier homolog 2 (303 aa).

Ala-2 is modified (N-acetylalanine). Residues 2-15 (ADAASQVLLGSGLT) are Mitochondrial intermembrane-facing. 2 Solcar repeats span residues 2-98 (ADAA…YQEC) and 118-206 (DRVI…VNTY). Residues 16-36 (ILSQPLMYVKVLIQVGYEPLA) traverse the membrane as a helical segment. Topologically, residues 37–77 (PTVGRNIFGRQVCQLPGLFCYAQHIASIDGKRGLFTGLTPR) are cytoplasmic. A helical transmembrane segment spans residues 78–92 (LCSGVLGTVVHGKVL). The Mitochondrial intermembrane portion of the chain corresponds to 93-135 (QHYQECDKAEESGSGNVQKEVSSSFDRVIKETTREMMARSAAT). Residues 136-156 (LITHPFHVITLRSMVQFIGRE) form a helical membrane-spanning segment. Residues 157 to 180 (SKYCGLCDSIATIYREEGILGFFA) lie on the Cytoplasmic side of the membrane. A helical transmembrane segment spans residues 181-199 (GLIPRLLGDIISLWLCNSL). Residues 200–231 (AYLVNTYALDSGVSTMNEMKSYSQAVTGFFAS) lie on the Mitochondrial intermembrane side of the membrane. A helical transmembrane segment spans residues 232-252 (MLTYPFVLVSNLMAVNNCGLA). At 253 to 280 (GGCPPYAPIYSSWIDCWCMLQKEGNMSR) the chain is on the cytoplasmic side. A helical membrane pass occupies residues 281–303 (GNSLFFRKVPFGKTYCCDLRMLI).

The protein belongs to the mitochondrial carrier (TC 2.A.29) family. As to quaternary structure, interacts with p15BID.

It is found in the mitochondrion outer membrane. Its function is as follows. Protein insertase that mediates insertion of transmembrane proteins into the mitochondrial outer membrane. Catalyzes insertion of proteins with alpha-helical transmembrane regions, such as signal-anchored, tail-anchored and multi-pass membrane proteins. Does not mediate insertion of beta-barrel transmembrane proteins. Also acts as a receptor for the truncated form of pro-apoptotic BH3-interacting domain death agonist (p15 BID) and has therefore a critical function in apoptosis. Regulates the quiescence/cycling of hematopoietic stem cells (HSCs). Acts as a regulator of mitochondrial fusion, essential for the naive-to-primed interconversion of embryonic stem cells (ESCs). Acts as a regulator of lipid homeostasis and has a regulatory role in adipocyte differentiation and biology. The chain is Mitochondrial carrier homolog 2 (MTCH2) from Bos taurus (Bovine).